A 429-amino-acid chain; its full sequence is Adenylosuccinate synthetase (429 aa).

Residues 12-18 (GDEGKGK) and 40-42 (GHT) each bind GTP. The Proton acceptor role is filled by D13. Mg(2+) is bound by residues D13 and G40. IMP contacts are provided by residues 13–16 (DEGK), 38–41 (NAGH), T128, R142, Q223, T238, and R302. Residue H41 is the Proton donor of the active site. 298–304 (TTTGRPR) contacts substrate. Residues R304, 330-332 (SID), and 412-414 (SVG) contribute to the GTP site.

Belongs to the adenylosuccinate synthetase family. Homodimer. Requires Mg(2+) as cofactor.

It localises to the cytoplasm. The enzyme catalyses IMP + L-aspartate + GTP = N(6)-(1,2-dicarboxyethyl)-AMP + GDP + phosphate + 2 H(+). Its pathway is purine metabolism; AMP biosynthesis via de novo pathway; AMP from IMP: step 1/2. Its function is as follows. Plays an important role in the de novo pathway of purine nucleotide biosynthesis. Catalyzes the first committed step in the biosynthesis of AMP from IMP. This Bacillus cereus (strain ATCC 10987 / NRS 248) protein is Adenylosuccinate synthetase.